The sequence spans 136 residues: Large ribosomal subunit protein uL3 (136 aa).

N5-methylglutamine is present on glutamine 83.

This sequence belongs to the universal ribosomal protein uL3 family. Part of the 50S ribosomal subunit. Forms a cluster with proteins L14 and L19. In terms of processing, methylated by PrmB.

Its function is as follows. One of the primary rRNA binding proteins, it binds directly near the 3'-end of the 23S rRNA, where it nucleates assembly of the 50S subunit. In Carsonella ruddii, this protein is Large ribosomal subunit protein uL3 (rplC).